The following is an 87-amino-acid chain: MSLLEFFRPQKKTSASLAKERLQIIVAERRSQNDPAPSYLPQLKEDILKVISKYVAIDPAMVDLTFEHKDDDISVLELNVKLPDEEK.

Belongs to the MinE family.

In terms of biological role, prevents the cell division inhibition by proteins MinC and MinD at internal division sites while permitting inhibition at polar sites. This ensures cell division at the proper site by restricting the formation of a division septum at the midpoint of the long axis of the cell. The sequence is that of Cell division topological specificity factor from Vibrio vulnificus (strain CMCP6).